The following is a 701-amino-acid chain: Polyribonucleotide nucleotidyltransferase (701 aa).

2 residues coordinate Mg(2+): aspartate 485 and aspartate 491. The KH domain maps to 552-611 (PKIFKTTVDPEKIRDIIGPGGKMINKIIAKTNVKIDIEPDGRIFVAAPDDISGNRAISMI). In terms of domain architecture, S1 motif spans 621–689 (GQFFLGKVTR…RLGRIALSRK (69 aa)).

Belongs to the polyribonucleotide nucleotidyltransferase family. It depends on Mg(2+) as a cofactor.

It localises to the cytoplasm. It catalyses the reaction RNA(n+1) + phosphate = RNA(n) + a ribonucleoside 5'-diphosphate. In terms of biological role, involved in mRNA degradation. Catalyzes the phosphorolysis of single-stranded polyribonucleotides processively in the 3'- to 5'-direction. In Caldicellulosiruptor saccharolyticus (strain ATCC 43494 / DSM 8903 / Tp8T 6331), this protein is Polyribonucleotide nucleotidyltransferase.